The following is a 345-amino-acid chain: MKFSKLASKLGSETITCSLEKINHLDPDIQGVAAIDEAKPGTLSYIEGAKFANYLKTTNASALILPMDETLQKLAGERGIGWLSSKEPRLLFAQAIALFYRPFQPTPEIHATSIVHPTAKVGKNVYLGAHVVVEAGVKIGDNVCIYPNVVIYPNVEIGENTILNANCSIHERSQIGKGCVIHSGAVIGGEGFGFVPTPEGWFKMEQSGKVILEDGVEVGGNTTIDRPAVGETRIGKNTKLDNLVQIGHGCKIGKNCALAAQVGLAGGVKLGDNVILAGQVGVANQAKIGDRAIATAQAGVHNDVAAGEIVSSSPAVPNKIYLKASAIYKRLPEIYQFVKQMKRKL.

The active-site Proton acceptor is the His-248.

Belongs to the transferase hexapeptide repeat family. LpxD subfamily. As to quaternary structure, homotrimer.

It catalyses the reaction a UDP-3-O-[(3R)-3-hydroxyacyl]-alpha-D-glucosamine + a (3R)-hydroxyacyl-[ACP] = a UDP-2-N,3-O-bis[(3R)-3-hydroxyacyl]-alpha-D-glucosamine + holo-[ACP] + H(+). Its pathway is bacterial outer membrane biogenesis; LPS lipid A biosynthesis. Its function is as follows. Catalyzes the N-acylation of UDP-3-O-acylglucosamine using 3-hydroxyacyl-ACP as the acyl donor. Is involved in the biosynthesis of lipid A, a phosphorylated glycolipid that anchors the lipopolysaccharide to the outer membrane of the cell. The chain is UDP-3-O-acylglucosamine N-acyltransferase from Trichodesmium erythraeum (strain IMS101).